The sequence spans 1953 residues: TATA-binding protein-associated factor mot1 (1953 aa).

One copy of the HEAT 1 repeat lies at 36-74 (PDELYNLLGRVVPYLKSKNWDTRVAAAKAIGGIVENVPV). The tract at residues 79-141 (RTSPVKKEET…KLEEERLSTR (63 aa)) is disordered. The span at 98 to 108 (TEEKPFIKTEE) shows a compositional bias: basic and acidic residues. Over residues 113–130 (SSQSQVVVSSNLTSNSEV) the composition is skewed to low complexity. Residues 131-141 (SKLEEERLSTR) are compositionally biased toward basic and acidic residues. Ser-144 carries the phosphoserine modification. A disordered region spans residues 240 to 278 (DNVGSNSKGSPTTSIPEHKTSINNNKPEDTPTPSENVHL). Positions 242-276 (VGSNSKGSPTTSIPEHKTSINNNKPEDTPTPSENV) are enriched in polar residues. HEAT repeat units follow at residues 358–396 (VWPFETLVELLLIDMFDPSWEIRHGACMGLREIIRYAGF), 513–551 (SDYLDSLINTVIHGLANHDDDVRAVSALTLLPIADKLVQ), 554–592 (LSSCKNLLKVLWDCLDDVKDDLSSSTSCVMDLLSSLCSF), and 608–646 (EFSFETLVPRLFHLMRYTLTGVRRSVVYALTKFISVQTS). 2 disordered regions span residues 730-762 (SGQPYAPSTSRERNNNISELSNSRTKHRAKDDP) and 1078-1103 (DDNDEQVSGKLVDDSDDVSNDRKSSL). HEAT repeat units lie at residues 1191–1229 (QSEIVSTLPHLLATLQSNYSAVRNMASKCFAAITESNAA) and 1270–1311 (VRIL…LVPL). The region spanning 1370–1543 (AFLNKYELHG…WSLFDFLMPG (174 aa)) is the Helicase ATP-binding domain. Residue 1383 to 1390 (DDMGLGKT) coordinates ATP. The short motif at 1494-1497 (DEGH) is the DEGH box element. One copy of the HEAT 8 repeat lies at 1580–1623 (EAIHKQVLPFMLRRLKEDVLADLPPKIIQDYYCDMSDLQRKLLN). The Helicase C-terminal domain occupies 1725-1877 (GIDSALTNAV…STVVNQQNAG (153 aa)). The disordered stretch occupies residues 1901-1920 (QNIDKEESEDAAGRGLSGTS).

It belongs to the SNF2/RAD54 helicase family. In terms of assembly, forms a complex with TBP which binds TATA DNA.

It localises to the nucleus. Its function is as follows. Regulates transcription in association with TATA binding protein (TBP). Removes TBP from the TATA box via its ATPase activity. The protein is TATA-binding protein-associated factor mot1 of Schizosaccharomyces pombe (strain 972 / ATCC 24843) (Fission yeast).